The chain runs to 300 residues: Ubiquinone biosynthesis protein COQ4, mitochondrial (300 aa).

His173, Asp174, His177, and Glu189 together coordinate Zn(2+).

The protein belongs to the COQ4 family. In terms of assembly, component of a multi-subunit COQ enzyme complex, composed of at least COQ3, COQ4, COQ5, COQ6, COQ7 and COQ9. Requires Zn(2+) as cofactor.

The protein localises to the mitochondrion inner membrane. The catalysed reaction is a 4-hydroxy-3-methoxy-5-(all-trans-polyprenyl)benzoate + H(+) = a 2-methoxy-6-(all-trans-polyprenyl)phenol + CO2. It participates in cofactor biosynthesis; ubiquinone biosynthesis. Lyase that catalyzes the C1-decarboxylation of 4-hydroxy-3-methoxy-5-(all-trans-polyprenyl)benzoic acid into 2-methoxy-6-(all-trans-polyprenyl)phenol during ubiquinone biosynthesis. The polypeptide is Ubiquinone biosynthesis protein COQ4, mitochondrial (Cryptococcus neoformans var. neoformans serotype D (strain JEC21 / ATCC MYA-565) (Filobasidiella neoformans)).